Consider the following 368-residue polypeptide: Aminomethyltransferase (368 aa).

The protein belongs to the GcvT family. As to quaternary structure, the glycine cleavage system is composed of four proteins: P, T, L and H.

It carries out the reaction N(6)-[(R)-S(8)-aminomethyldihydrolipoyl]-L-lysyl-[protein] + (6S)-5,6,7,8-tetrahydrofolate = N(6)-[(R)-dihydrolipoyl]-L-lysyl-[protein] + (6R)-5,10-methylene-5,6,7,8-tetrahydrofolate + NH4(+). In terms of biological role, the glycine cleavage system catalyzes the degradation of glycine. This Xylella fastidiosa (strain M23) protein is Aminomethyltransferase.